A 284-amino-acid chain; its full sequence is Diaminopimelate epimerase (284 aa).

Substrate is bound by residues N13 and N70. C79 functions as the Proton donor in the catalytic mechanism. Substrate is bound by residues 80 to 81 (GN), N167, N200, and 218 to 219 (ER). The active-site Proton acceptor is C227. 228–229 (GT) is a substrate binding site.

It belongs to the diaminopimelate epimerase family. As to quaternary structure, homodimer.

It is found in the cytoplasm. The enzyme catalyses (2S,6S)-2,6-diaminopimelate = meso-2,6-diaminopimelate. It functions in the pathway amino-acid biosynthesis; L-lysine biosynthesis via DAP pathway; DL-2,6-diaminopimelate from LL-2,6-diaminopimelate: step 1/1. Its function is as follows. Catalyzes the stereoinversion of LL-2,6-diaminopimelate (L,L-DAP) to meso-diaminopimelate (meso-DAP), a precursor of L-lysine and an essential component of the bacterial peptidoglycan. The protein is Diaminopimelate epimerase of Prochlorococcus marinus (strain NATL1A).